We begin with the raw amino-acid sequence, 354 residues long: Putative Xaa-Pro aminopeptidase (354 aa).

Residues aspartate 213, aspartate 224, histidine 290, glutamate 319, and glutamate 333 each contribute to the Mn(2+) site.

This sequence belongs to the peptidase M24B family. Requires Mn(2+) as cofactor.

The enzyme catalyses Release of any N-terminal amino acid, including proline, that is linked to proline, even from a dipeptide or tripeptide.. This is Putative Xaa-Pro aminopeptidase (pepP) from Mycoplasma genitalium (strain ATCC 33530 / DSM 19775 / NCTC 10195 / G37) (Mycoplasmoides genitalium).